We begin with the raw amino-acid sequence, 62 residues long: Large ribosomal subunit protein bL28 (62 aa).

This sequence belongs to the bacterial ribosomal protein bL28 family.

The polypeptide is Large ribosomal subunit protein bL28 (Moorella thermoacetica (strain ATCC 39073 / JCM 9320)).